Here is a 231-residue protein sequence, read N- to C-terminus: Probable septum site-determining protein MinC (231 aa).

Residues 102 to 125 (KEKAPRPAPAPQAPTQNTTPVTKT) are disordered. Positions 114-123 (APTQNTTPVT) are enriched in low complexity.

It belongs to the MinC family. In terms of assembly, interacts with MinD and FtsZ.

Cell division inhibitor that blocks the formation of polar Z ring septums. Rapidly oscillates between the poles of the cell to destabilize FtsZ filaments that have formed before they mature into polar Z rings. Prevents FtsZ polymerization. In Escherichia coli O45:K1 (strain S88 / ExPEC), this protein is Probable septum site-determining protein MinC.